Consider the following 156-residue polypeptide: ATP synthase subunit b (156 aa).

A helical transmembrane segment spans residues 7–29; sequence LIGQSLTFIAFILFCMKYVWPQL.

This sequence belongs to the ATPase B chain family. In terms of assembly, F-type ATPases have 2 components, F(1) - the catalytic core - and F(0) - the membrane proton channel. F(1) has five subunits: alpha(3), beta(3), gamma(1), delta(1), epsilon(1). F(0) has three main subunits: a(1), b(2) and c(10-14). The alpha and beta chains form an alternating ring which encloses part of the gamma chain. F(1) is attached to F(0) by a central stalk formed by the gamma and epsilon chains, while a peripheral stalk is formed by the delta and b chains.

It is found in the cell inner membrane. Functionally, f(1)F(0) ATP synthase produces ATP from ADP in the presence of a proton or sodium gradient. F-type ATPases consist of two structural domains, F(1) containing the extramembraneous catalytic core and F(0) containing the membrane proton channel, linked together by a central stalk and a peripheral stalk. During catalysis, ATP synthesis in the catalytic domain of F(1) is coupled via a rotary mechanism of the central stalk subunits to proton translocation. In terms of biological role, component of the F(0) channel, it forms part of the peripheral stalk, linking F(1) to F(0). The polypeptide is ATP synthase subunit b (Saccharophagus degradans (strain 2-40 / ATCC 43961 / DSM 17024)).